A 650-amino-acid polypeptide reads, in one-letter code: Aminopeptidase B (650 aa).

Residue 298–302 (GGMEN) participates in substrate binding. Zn(2+) is bound at residue H325. E326 serves as the catalytic Proton acceptor. 2 residues coordinate Zn(2+): H329 and E348. An N6-acetyllysine modification is found at K446.

It belongs to the peptidase M1 family. Monomer. Zn(2+) serves as cofactor.

It localises to the secreted. The enzyme catalyses Release of N-terminal Arg and Lys from oligopeptides when P1' is not Pro. Also acts on arylamides of Arg and Lys.. In terms of biological role, exopeptidase which selectively removes arginine and/or lysine residues from the N-terminus of several peptide substrates including Arg(0)-Leu-enkephalin, Arg(0)-Met-enkephalin and Arg(-1)-Lys(0)-somatostatin-14. Can hydrolyze leukotriene A4 (LTA-4) into leukotriene B4 (LTB-4). The chain is Aminopeptidase B (Rnpep) from Mus musculus (Mouse).